The sequence spans 159 residues: Urease accessory protein UreE (159 aa).

It belongs to the UreE family.

It is found in the cytoplasm. Involved in urease metallocenter assembly. Binds nickel. Probably functions as a nickel donor during metallocenter assembly. This is Urease accessory protein UreE from Vibrio parahaemolyticus.